The following is a 341-amino-acid chain: Phosphate acyltransferase (341 aa).

This sequence belongs to the PlsX family. As to quaternary structure, homodimer. Probably interacts with PlsY.

The protein localises to the cytoplasm. The enzyme catalyses a fatty acyl-[ACP] + phosphate = an acyl phosphate + holo-[ACP]. It functions in the pathway lipid metabolism; phospholipid metabolism. Its function is as follows. Catalyzes the reversible formation of acyl-phosphate (acyl-PO(4)) from acyl-[acyl-carrier-protein] (acyl-ACP). This enzyme utilizes acyl-ACP as fatty acyl donor, but not acyl-CoA. This is Phosphate acyltransferase from Idiomarina loihiensis (strain ATCC BAA-735 / DSM 15497 / L2-TR).